We begin with the raw amino-acid sequence, 424 residues long: UDP-N-acetylglucosamine 1-carboxyvinyltransferase (424 aa).

Residue lysine 22 to asparagine 23 participates in phosphoenolpyruvate binding. Arginine 98 is a UDP-N-acetyl-alpha-D-glucosamine binding site. Cysteine 122 functions as the Proton donor in the catalytic mechanism. Cysteine 122 is subject to 2-(S-cysteinyl)pyruvic acid O-phosphothioketal. Residues arginine 127–glutamine 131, aspartate 312, and isoleucine 334 contribute to the UDP-N-acetyl-alpha-D-glucosamine site.

This sequence belongs to the EPSP synthase family. MurA subfamily.

The protein resides in the cytoplasm. The catalysed reaction is phosphoenolpyruvate + UDP-N-acetyl-alpha-D-glucosamine = UDP-N-acetyl-3-O-(1-carboxyvinyl)-alpha-D-glucosamine + phosphate. The protein operates within cell wall biogenesis; peptidoglycan biosynthesis. Functionally, cell wall formation. Adds enolpyruvyl to UDP-N-acetylglucosamine. The chain is UDP-N-acetylglucosamine 1-carboxyvinyltransferase from Xanthomonas campestris pv. campestris (strain 8004).